Consider the following 113-residue polypeptide: MTRVKRGYVAVRRRNRVLERAAGFRGAHSRLFRPAKQQVMKALVASKRDRDKRKRDFRKLWITRINAAVRKQGMSYSRFIHQLYQSKILINRKMIAQIAVLDENGFTSIVNNI.

The protein belongs to the bacterial ribosomal protein bL20 family.

Its subcellular location is the plastid. The protein resides in the chloroplast. Binds directly to 23S ribosomal RNA and is necessary for the in vitro assembly process of the 50S ribosomal subunit. It is not involved in the protein synthesizing functions of that subunit. The protein is Large ribosomal subunit protein bL20c of Staurastrum punctulatum (Green alga).